Consider the following 143-residue polypeptide: Large ribosomal subunit protein uL15 (143 aa).

Basic residues-rich tracts occupy residues 1 to 13 and 23 to 38; these read MIRKSKKITKQRG and KKHRGAGHRGGRGNAG. The tract at residues 1-38 is disordered; sequence MIRKSKKITKQRGSRTCGYGEAKKHRGAGHRGGRGNAG.

This sequence belongs to the universal ribosomal protein uL15 family. In terms of assembly, part of the 50S ribosomal subunit.

In terms of biological role, binds to the 23S rRNA. This chain is Large ribosomal subunit protein uL15, found in Methanococcus vannielii.